Consider the following 486-residue polypeptide: RAC-beta serine/threonine-protein kinase A (486 aa).

A PH domain is found at 5 to 110 (MVIKEGWLQK…WIIAIQTVAN (106 aa)). 2 O-linked (GlcNAc) serine glycosylation sites follow: serine 133 and serine 136. The Protein kinase domain maps to 157–414 (FDYLKLLGKG…AQEVMSHRFF (258 aa)). ATP-binding positions include 163–171 (LGKGTFGKV) and lysine 186. Residue aspartate 280 is the Proton acceptor of the active site. Residue threonine 311 is glycosylated (O-linked (GlcNAc) threonine). Threonine 314 is modified (phosphothreonine). The O-linked (GlcNAc) threonine glycan is linked to threonine 318. In terms of domain architecture, AGC-kinase C-terminal spans 415 to 486 (VSINWQDVTE…QFSYSASIRE (72 aa)). Residues 455 to 486 (LTPPDRYDNLDALESDQRPHFPQFSYSASIRE) are disordered. Positions 459–473 (DRYDNLDALESDQRP) are enriched in basic and acidic residues. Position 479 is a phosphoserine (serine 479). O-linked (GlcNAc) serine; alternate glycosylation occurs at serine 479.

The protein belongs to the protein kinase superfamily. AGC Ser/Thr protein kinase family. RAC subfamily. In terms of processing, phosphorylation on Thr-314 and Ser-479 is required for full activity. Phosphorylation of the activation loop at Thr-314 by PDPK1/PDK1 is a prerequisite for full activation. Phosphorylation by mTORC2 at Ser-479 in response to growth factors plays a key role in AKT1 activation by facilitating subsequent phosphorylation of the activation loop by PDPK1/PDK1.

The catalysed reaction is L-seryl-[protein] + ATP = O-phospho-L-seryl-[protein] + ADP + H(+). It carries out the reaction L-threonyl-[protein] + ATP = O-phospho-L-threonyl-[protein] + ADP + H(+). Its activity is regulated as follows. Two specific sites, one in the kinase domain (Thr-314) and the other in the C-terminal regulatory region (Ser-479), need to be phosphorylated for its full activation. Functionally, akt2-a is one of several closely related serine/threonine-protein kinases known as the AKT kinase, and which regulate many processes including metabolism, proliferation, cell survival, growth and angiogenesis. This is mediated through serine and/or threonine phosphorylation of a range of downstream substrates. Over 100 substrate candidates have been reported so far, but for most of them, no isoform specificity has been reported. May be involved in the inhibition of ciliogenesis. The chain is RAC-beta serine/threonine-protein kinase A (akt2-a) from Xenopus laevis (African clawed frog).